The sequence spans 176 residues: Peptide deformylase (176 aa).

Fe cation contacts are provided by C94 and H136. Residue E137 is part of the active site. H140 contributes to the Fe cation binding site.

Belongs to the polypeptide deformylase family. Fe(2+) is required as a cofactor.

The enzyme catalyses N-terminal N-formyl-L-methionyl-[peptide] + H2O = N-terminal L-methionyl-[peptide] + formate. In terms of biological role, removes the formyl group from the N-terminal Met of newly synthesized proteins. Requires at least a dipeptide for an efficient rate of reaction. N-terminal L-methionine is a prerequisite for activity but the enzyme has broad specificity at other positions. The polypeptide is Peptide deformylase (Bartonella quintana (strain Toulouse) (Rochalimaea quintana)).